The sequence spans 298 residues: Biphenyl-2,3-diol 1,2-dioxygenase (298 aa).

2 VOC domains span residues 5-119 and 143-264; these read SLGY…IYYG and GLGH…YGWS. Residues His146, His210, and Glu260 each contribute to the Fe cation site.

It belongs to the extradiol ring-cleavage dioxygenase family. Homooctamer. The enzyme is composed of two planar tetramers rotated at 45 degrees relative to each other, with a channel in the middle. The cofactor is Fe(2+).

The catalysed reaction is biphenyl-2,3-diol + O2 = 2-hydroxy-6-oxo-6-phenylhexa-2,4-dienoate + H(+). It participates in xenobiotic degradation; biphenyl degradation; 2-hydroxy-2,4-pentadienoate and benzoate from biphenyl: step 3/4. Shows a preference for catechols with groups immediately adjacent to the hydroxyl substituents. The sequence is that of Biphenyl-2,3-diol 1,2-dioxygenase (bphC) from Paraburkholderia xenovorans (strain LB400).